A 553-amino-acid chain; its full sequence is Methyl-coenzyme M reductase I subunit alpha (553 aa).

A coenzyme F430-binding site is contributed by Gln-150. Residues Arg-228, Lys-259–His-260, and Arg-273 contribute to the coenzyme B site. Arg-274 carries the 5-methylarginine modification. Residues Tyr-335 and Tyr-447 each coordinate coenzyme M.

This sequence belongs to the methyl-coenzyme M reductase alpha subunit family. MCR is a hexamer of two alpha, two beta, and two gamma chains, forming a dimer of heterotrimers. It depends on coenzyme F430 as a cofactor. In terms of processing, is methylated on C5 of Arg-274 by the methyltransferase MJ0841. This post-translational methylation, despite being not essential in vivo, plays a role for the stability and structural integrity of MCR.

Its subcellular location is the cytoplasm. The enzyme catalyses coenzyme B + methyl-coenzyme M = methane + coenzyme M-coenzyme B heterodisulfide. It functions in the pathway one-carbon metabolism; methyl-coenzyme M reduction; methane from methyl-coenzyme M: step 1/1. Component of the methyl-coenzyme M reductase (MCR) I that catalyzes the reductive cleavage of methyl-coenzyme M (CoM-S-CH3 or 2-(methylthio)ethanesulfonate) using coenzyme B (CoB or 7-mercaptoheptanoylthreonine phosphate) as reductant which results in the production of methane and the mixed heterodisulfide of CoB and CoM (CoM-S-S-CoB). This is the final step in methanogenesis. The sequence is that of Methyl-coenzyme M reductase I subunit alpha (mcrA) from Methanocaldococcus jannaschii (strain ATCC 43067 / DSM 2661 / JAL-1 / JCM 10045 / NBRC 100440) (Methanococcus jannaschii).